A 215-amino-acid polypeptide reads, in one-letter code: Oligoribonuclease (215 aa).

An Exonuclease domain is found at 5–170 (LVWIDCEMTG…ADIHESIREL (166 aa)). Tyr-127 is an active-site residue. The tract at residues 196–215 (LDEGKDAPGPSDSASAPPTG) is disordered. The segment covering 202–215 (APGPSDSASAPPTG) has biased composition (low complexity).

It belongs to the oligoribonuclease family.

It is found in the cytoplasm. Its function is as follows. 3'-to-5' exoribonuclease specific for small oligoribonucleotides. This is Oligoribonuclease from Mycolicibacterium paratuberculosis (strain ATCC BAA-968 / K-10) (Mycobacterium paratuberculosis).